Reading from the N-terminus, the 207-residue chain is Outer-membrane lipoprotein LolB (207 aa).

The signal sequence occupies residues 1–21 (MPLPDFRLIRLLPLAALVLTA). Cys22 is lipidated: N-palmitoyl cysteine. A lipid anchor (S-diacylglycerol cysteine) is attached at Cys22.

It belongs to the LolB family. As to quaternary structure, monomer.

It is found in the cell outer membrane. Plays a critical role in the incorporation of lipoproteins in the outer membrane after they are released by the LolA protein. The protein is Outer-membrane lipoprotein LolB of Escherichia coli O7:K1 (strain IAI39 / ExPEC).